The chain runs to 364 residues: Peptide chain release factor 2 (364 aa).

N5-methylglutamine is present on Gln-252.

It belongs to the prokaryotic/mitochondrial release factor family. Post-translationally, methylated by PrmC. Methylation increases the termination efficiency of RF2.

It localises to the cytoplasm. Peptide chain release factor 2 directs the termination of translation in response to the peptide chain termination codons UGA and UAA. The chain is Peptide chain release factor 2 from Clostridium perfringens (strain SM101 / Type A).